The sequence spans 95 residues: uncharacterized protein (95 aa).

This sequence belongs to the asfivirus DP96R family.

This is an uncharacterized protein from African swine fever virus (isolate Warthog/Namibia/Wart80/1980) (ASFV).